The chain runs to 333 residues: UPF0284 protein TGAM_0534 (333 aa).

It belongs to the UPF0284 family.

In Thermococcus gammatolerans (strain DSM 15229 / JCM 11827 / EJ3), this protein is UPF0284 protein TGAM_0534.